The primary structure comprises 130 residues: Small ribosomal subunit protein uS13 (130 aa).

Residues 97 to 116 (PVRGQRTKTNARTRRGKRKT) are compositionally biased toward basic residues. Positions 97–130 (PVRGQRTKTNARTRRGKRKTVGAGKSTSSIKRVK) are disordered. Over residues 121–130 (KSTSSIKRVK) the composition is skewed to polar residues.

The protein belongs to the universal ribosomal protein uS13 family. In terms of assembly, part of the 30S ribosomal subunit. Forms a loose heterodimer with protein S19. Forms two bridges to the 50S subunit in the 70S ribosome.

Located at the top of the head of the 30S subunit, it contacts several helices of the 16S rRNA. In the 70S ribosome it contacts the 23S rRNA (bridge B1a) and protein L5 of the 50S subunit (bridge B1b), connecting the 2 subunits; these bridges are implicated in subunit movement. Contacts the tRNAs in the A and P-sites. This chain is Small ribosomal subunit protein uS13, found in Endomicrobium trichonymphae.